The sequence spans 254 residues: MGSLLSPEANAEVPREALSFHGNATGAQVHLDDQRSTARRRSTFHDGIVFSQRPVWPGERVALRVLRHEEGWCGGLRVGFTRLDPAQVAASCLPPFVCPDLEEQSPTWAALLPEGFVRAGNVVCFWVNRRGWLFAKVNAGRPLLLRKDVLVQGAPLWAVMDVYGTTKAIELLDPKANAWIRSGEPVPESEVISGEECVICFHNTANTRLMPCGHSHFCGSCAWHIFKDTARCPICRWQIEEVAVVSSLKAEEGS.

The region spanning 17–174 (ALSFHGNATG…TTKAIELLDP (158 aa)) is the NHR domain. The RING-type zinc finger occupies 197–236 (CVICFHNTANTRLMPCGHSHFCGSCAWHIFKDTARCPICR).

As to expression, expressed in alveolar epithelial type II cells.

The protein resides in the cytoplasm. It catalyses the reaction S-ubiquitinyl-[E2 ubiquitin-conjugating enzyme]-L-cysteine + [acceptor protein]-L-lysine = [E2 ubiquitin-conjugating enzyme]-L-cysteine + N(6)-ubiquitinyl-[acceptor protein]-L-lysine.. It participates in protein modification; protein ubiquitination. In terms of biological role, E3 ubiquitin-protein ligase that plays a role in various biological processes such as lung development or innate immunity. Seems to utilize UBE2E1. Promotes innate antiviral response by catalyzing 'Lys-63'-linked ubiquitination of IRF7. Plays an essential role in TLR4-mediated activation of MAPK pathways by promoting 'Lys-48'-linked polyubiquitination of the phosphatase DUSP1/MKP1. The polypeptide is E3 ubiquitin-protein ligase NEURL3 (Neurl3) (Mus musculus (Mouse)).